We begin with the raw amino-acid sequence, 387 residues long: Eukaryotic translation initiation factor 3 subunit M (387 aa).

The PCI domain occupies 181-340 (LSSKVMIELL…QKVHISSTMH (160 aa)).

The protein belongs to the eIF-3 subunit M family. Component of the eukaryotic translation initiation factor 3 (eIF-3) complex. The eIF-3 complex interacts with pix.

The protein resides in the cytoplasm. Its subcellular location is the golgi apparatus. Functionally, component of the eukaryotic translation initiation factor 3 (eIF-3) complex, which is involved in protein synthesis of a specialized repertoire of mRNAs and, together with other initiation factors, stimulates binding of mRNA and methionyl-tRNAi to the 40S ribosome. The eIF-3 complex specifically targets and initiates translation of a subset of mRNAs involved in cell proliferation. This is Eukaryotic translation initiation factor 3 subunit M from Drosophila sechellia (Fruit fly).